Reading from the N-terminus, the 378-residue chain is Small RNA 2'-O-methyltransferase (378 aa).

Aspartate 61 is an S-adenosyl-L-methionine binding site. The Mg(2+) site is built by glutamate 114, glutamate 117, histidine 118, and histidine 176.

This sequence belongs to the methyltransferase superfamily. HEN1 family. The cofactor is Mg(2+).

The protein localises to the cytoplasm. The catalysed reaction is small RNA 3'-end nucleotide + S-adenosyl-L-methionine = small RNA 3'-end 2'-O-methylnucleotide + S-adenosyl-L-homocysteine + H(+). Methyltransferase that adds a 2'-O-methyl group at the 3'-end of small RNAs. The polypeptide is Small RNA 2'-O-methyltransferase (Schizosaccharomyces pombe (strain 972 / ATCC 24843) (Fission yeast)).